A 605-amino-acid chain; its full sequence is Sulfite reductase [NADPH] flavoprotein alpha-component (605 aa).

In terms of domain architecture, Flavodoxin-like spans 70–208 (LTIIYASQTG…PAAEWRVKAL (139 aa)). Residues 76 to 81 (SQTGNA), 123 to 126 (STHG), and 159 to 168 (LGDSSYEFFC) each bind FMN. Residues 240-454 (QNPYEATLLT…VEENNNFKLP (215 aa)) enclose the FAD-binding FR-type domain. Residues Thr-328, Gly-362, 392-395 (RLYS), 410-412 (TVG), and 425-428 (GGAS) each bind FAD. Residues 525 to 526 (SR), 531 to 535 (KVYVQ), and Asp-567 each bind NADP(+). Residue Tyr-605 coordinates FAD.

Belongs to the NADPH-dependent sulphite reductase flavoprotein subunit CysJ family. It in the N-terminal section; belongs to the flavodoxin family. This sequence in the C-terminal section; belongs to the flavoprotein pyridine nucleotide cytochrome reductase family. As to quaternary structure, alpha(8)-beta(8). The alpha component is a flavoprotein, the beta component is a hemoprotein. The cofactor is FAD. It depends on FMN as a cofactor.

The catalysed reaction is hydrogen sulfide + 3 NADP(+) + 3 H2O = sulfite + 3 NADPH + 4 H(+). It functions in the pathway sulfur metabolism; hydrogen sulfide biosynthesis; hydrogen sulfide from sulfite (NADPH route): step 1/1. In terms of biological role, component of the sulfite reductase complex that catalyzes the 6-electron reduction of sulfite to sulfide. This is one of several activities required for the biosynthesis of L-cysteine from sulfate. The flavoprotein component catalyzes the electron flow from NADPH -&gt; FAD -&gt; FMN to the hemoprotein component. The polypeptide is Sulfite reductase [NADPH] flavoprotein alpha-component (Photobacterium profundum (strain SS9)).